The chain runs to 86 residues: Large ribosomal subunit protein eL30 (86 aa).

This sequence belongs to the eukaryotic ribosomal protein eL30 family.

This is Large ribosomal subunit protein eL30 (rpl30e) from Archaeoglobus fulgidus (strain ATCC 49558 / DSM 4304 / JCM 9628 / NBRC 100126 / VC-16).